A 399-amino-acid polypeptide reads, in one-letter code: Tryptophan synthase beta chain (399 aa).

Position 91 is an N6-(pyridoxal phosphate)lysine (Lys91).

The protein belongs to the TrpB family. In terms of assembly, tetramer of two alpha and two beta chains. Pyridoxal 5'-phosphate serves as cofactor.

It catalyses the reaction (1S,2R)-1-C-(indol-3-yl)glycerol 3-phosphate + L-serine = D-glyceraldehyde 3-phosphate + L-tryptophan + H2O. The protein operates within amino-acid biosynthesis; L-tryptophan biosynthesis; L-tryptophan from chorismate: step 5/5. Its function is as follows. The beta subunit is responsible for the synthesis of L-tryptophan from indole and L-serine. This is Tryptophan synthase beta chain from Shouchella clausii (strain KSM-K16) (Alkalihalobacillus clausii).